A 242-amino-acid polypeptide reads, in one-letter code: Invasion chromosome antigen R (242 aa).

It is found in the secreted. Functionally, may contribute to pathogenesis, although some of its characteristics suggest it is a fossil gene. This chain is Invasion chromosome antigen R, found in Shigella flexneri serotype 5a (strain M90T).